Reading from the N-terminus, the 75-residue chain is MKRFFIGCIRLYQKFISPLTPPTCRFYPTCSHYGIEAIQRFGVLKGGWLTIKRISKCHPFHRGGIDPVPEKKQEK.

It belongs to the UPF0161 family.

It is found in the cell membrane. Its function is as follows. Could be involved in insertion of integral membrane proteins into the membrane. In Halalkalibacterium halodurans (strain ATCC BAA-125 / DSM 18197 / FERM 7344 / JCM 9153 / C-125) (Bacillus halodurans), this protein is Putative membrane protein insertion efficiency factor.